A 141-amino-acid polypeptide reads, in one-letter code: Large ribosomal subunit protein uL11 (141 aa).

It belongs to the universal ribosomal protein uL11 family. As to quaternary structure, part of the ribosomal stalk of the 50S ribosomal subunit. Interacts with L10 and the large rRNA to form the base of the stalk. L10 forms an elongated spine to which L12 dimers bind in a sequential fashion forming a multimeric L10(L12)X complex. Post-translationally, one or more lysine residues are methylated.

Forms part of the ribosomal stalk which helps the ribosome interact with GTP-bound translation factors. In Amoebophilus asiaticus (strain 5a2), this protein is Large ribosomal subunit protein uL11.